Consider the following 807-residue polypeptide: Ribosome-releasing factor 2, mitochondrial (807 aa).

A mitochondrion-targeting transit peptide spans 1-18 (MFCRKYVFQTWKQLSRSY). The region spanning 27 to 315 (AKTRNIGIIA…GITKYLPSPL (289 aa)) is the tr-type G domain. Residues 36 to 43 (AHIDAGKT), 100 to 104 (DTPGH), and 154 to 157 (NKMD) each bind GTP.

It belongs to the TRAFAC class translation factor GTPase superfamily. Classic translation factor GTPase family. EF-G/EF-2 subfamily.

It localises to the mitochondrion. Mitochondrial GTPase that mediates the disassembly of ribosomes from messenger RNA at the termination of mitochondrial protein biosynthesis. Not involved in the GTP-dependent ribosomal translocation step during translation elongation. The protein is Ribosome-releasing factor 2, mitochondrial of Candida albicans (strain SC5314 / ATCC MYA-2876) (Yeast).